We begin with the raw amino-acid sequence, 345 residues long: S-adenosylmethionine:tRNA ribosyltransferase-isomerase (345 aa).

The protein belongs to the QueA family. Monomer.

It localises to the cytoplasm. It catalyses the reaction 7-aminomethyl-7-carbaguanosine(34) in tRNA + S-adenosyl-L-methionine = epoxyqueuosine(34) in tRNA + adenine + L-methionine + 2 H(+). Its pathway is tRNA modification; tRNA-queuosine biosynthesis. Transfers and isomerizes the ribose moiety from AdoMet to the 7-aminomethyl group of 7-deazaguanine (preQ1-tRNA) to give epoxyqueuosine (oQ-tRNA). The polypeptide is S-adenosylmethionine:tRNA ribosyltransferase-isomerase (Helicobacter pylori (strain P12)).